The sequence spans 236 residues: Small ribosomal subunit protein uS2c (236 aa).

This sequence belongs to the universal ribosomal protein uS2 family.

It localises to the plastid. The protein resides in the chloroplast. The chain is Small ribosomal subunit protein uS2c (rps2) from Manihot esculenta (Cassava).